The following is a 220-amino-acid chain: Outer membrane protein assembly factor BamD (220 aa).

A signal peptide spans 1 to 22 (MRLKHFKTFLFITMAIIVIGTG). Cysteine 23 is lipidated: N-palmitoyl cysteine. The S-diacylglycerol cysteine moiety is linked to residue cysteine 23.

This sequence belongs to the BamD family. As to quaternary structure, part of the Bam complex.

It localises to the cell outer membrane. Its function is as follows. Part of the outer membrane protein assembly complex, which is involved in assembly and insertion of beta-barrel proteins into the outer membrane. The protein is Outer membrane protein assembly factor BamD of Helicobacter pylori (strain ATCC 700392 / 26695) (Campylobacter pylori).